A 134-amino-acid chain; its full sequence is Phosphoribosyl-ATP pyrophosphatase (134 aa).

It belongs to the PRA-PH family.

Its subcellular location is the cytoplasm. The catalysed reaction is 1-(5-phospho-beta-D-ribosyl)-ATP + H2O = 1-(5-phospho-beta-D-ribosyl)-5'-AMP + diphosphate + H(+). It functions in the pathway amino-acid biosynthesis; L-histidine biosynthesis; L-histidine from 5-phospho-alpha-D-ribose 1-diphosphate: step 2/9. In Verminephrobacter eiseniae (strain EF01-2), this protein is Phosphoribosyl-ATP pyrophosphatase.